Reading from the N-terminus, the 127-residue chain is uncharacterized protein (127 aa).

The next 2 membrane-spanning stretches (helical) occupy residues 13 to 35 and 57 to 81; these read ILLL…GIIF and AVLI…IMIW.

Its subcellular location is the cell membrane. This is an uncharacterized protein from Mycoplasma genitalium (strain ATCC 33530 / DSM 19775 / NCTC 10195 / G37) (Mycoplasmoides genitalium).